A 78-amino-acid chain; its full sequence is Surfactant-associated protein 2 (78 aa).

An N-terminal signal peptide occupies residues 1–19 (MGAGLPLVLLLTLVGSSQG). Residue Asn37 is glycosylated (N-linked (GlcNAc...) asparagine).

N-glycosylated.

It is found in the secreted. The protein localises to the cytoplasmic vesicle. The protein resides in the secretory vesicle. It localises to the golgi apparatus. Putative surfactant protein. The protein is Surfactant-associated protein 2 (SFTA2) of Bos taurus (Bovine).